A 183-amino-acid chain; its full sequence is Ribosome maturation factor RimM (183 aa).

In terms of domain architecture, PRC barrel spans 104-183 (EGDYYWKDLI…TIEVDWDPGF (80 aa)).

Belongs to the RimM family. As to quaternary structure, binds ribosomal protein uS19.

The protein resides in the cytoplasm. In terms of biological role, an accessory protein needed during the final step in the assembly of 30S ribosomal subunit, possibly for assembly of the head region. Essential for efficient processing of 16S rRNA. May be needed both before and after RbfA during the maturation of 16S rRNA. It has affinity for free ribosomal 30S subunits but not for 70S ribosomes. The chain is Ribosome maturation factor RimM from Cronobacter sakazakii (strain ATCC BAA-894) (Enterobacter sakazakii).